Here is a 198-residue protein sequence, read N- to C-terminus: MHYPEPISKLIDSFMKLPGIGPKTAQRLAFHVLDMKEDDVVQFAKALVDVKRELTYCSECGHITEQDPCYICQDKQRDRSVICVVEDDKDVIAMEKMREYKGLYHVLHGSISPMDGIGPEDINIPSLINRLKDEEVKELILAMNPNLEGESTAMYISRLVKPIGITVTRLAQGLSVGGDLEYADEVTLSKAIMGRTEM.

The segment at 57–72 (CSECGHITEQDPCYIC) adopts a C4-type zinc-finger fold. One can recognise a Toprim domain in the interval 80 to 175 (SVICVVEDDK…TVTRLAQGLS (96 aa)).

This sequence belongs to the RecR family.

In terms of biological role, may play a role in DNA repair. It seems to be involved in an RecBC-independent recombinational process of DNA repair. It may act with RecF and RecO. The protein is Recombination protein RecR of Staphylococcus saprophyticus subsp. saprophyticus (strain ATCC 15305 / DSM 20229 / NCIMB 8711 / NCTC 7292 / S-41).